Here is a 346-residue protein sequence, read N- to C-terminus: Protein RecA (346 aa).

65-72 is an ATP binding site; it reads GPESSGKT.

The protein belongs to the RecA family.

It is found in the cytoplasm. Functionally, can catalyze the hydrolysis of ATP in the presence of single-stranded DNA, the ATP-dependent uptake of single-stranded DNA by duplex DNA, and the ATP-dependent hybridization of homologous single-stranded DNAs. It interacts with LexA causing its activation and leading to its autocatalytic cleavage. This chain is Protein RecA, found in Enterococcus hirae (strain ATCC 9790 / DSM 20160 / JCM 8729 / LMG 6399 / NBRC 3181 / NCIMB 6459 / NCDO 1258 / NCTC 12367 / WDCM 00089 / R).